We begin with the raw amino-acid sequence, 370 residues long: MWGGSKLSSSGSRFLGALRSGFQSTQVDSSRLTTSAVYPKNQLSWILQIKPWVFNENRIMWFKSYSITFACLNWMKSYRLPWTRPYSTSRTTVDKNEMKTFLALAHRWWDEQGVYAPLHSMNDLRVPFIRDNLLRTVATHQPGKPLSGMKILDVGCGGGLLTEPLGRLGASVIGIDPVDENIKTAQHHKSFDPVLDKRIEYRTCSLEEIVKDTVETFDAVVASEVVEHVIDLETFIQCCFQVLKPDGSLFITTINKTQLSYALGIVFSEQIAGIVPKGTHTWEKFVSPEKLESILESNGLSVQTVVGMLYNPFSGYWHWSENTSLNYAAHALKSSLQEQPAPAEFALKGEAEELQAEASTNSGVQEDLKK.

The transit peptide at 1-86 directs the protein to the mitochondrion; that stretch reads MWGGSKLSSS…SYRLPWTRPY (86 aa). S-adenosyl-L-methionine is bound at residue Arg-125. Residues Lys-144 and Lys-150 each carry the N6-acetyllysine modification. Residues Gly-155 and Asp-176 each contribute to the S-adenosyl-L-methionine site. At Lys-197 the chain carries N6-acetyllysine. Ser-223 is an S-adenosyl-L-methionine binding site. Residues Glu-224, Glu-227, and His-228 each coordinate Mg(2+).

This sequence belongs to the class I-like SAM-binding methyltransferase superfamily. UbiG/COQ3 family. Component of a multi-subunit COQ enzyme complex, composed of at least COQ3, COQ4, COQ5, COQ6, COQ7 and COQ9. Mg(2+) serves as cofactor.

The protein resides in the mitochondrion inner membrane. The catalysed reaction is 3,4-dihydroxy-5-(all-trans-decaprenyl)benzoate + S-adenosyl-L-methionine = 4-hydroxy-3-methoxy-5-(all-trans-decaprenyl)benzoate + S-adenosyl-L-homocysteine + H(+). The enzyme catalyses a 3-demethylubiquinone + S-adenosyl-L-methionine = a ubiquinone + S-adenosyl-L-homocysteine. It catalyses the reaction 3-demethylubiquinol-10 + S-adenosyl-L-methionine = ubiquinol-10 + S-adenosyl-L-homocysteine + H(+). It participates in cofactor biosynthesis; ubiquinone biosynthesis. In terms of biological role, O-methyltransferase required for two non-consecutive steps during ubiquinone biosynthesis. Catalyzes the 2 O-methylation of 3,4-dihydroxy-5-(all-trans-decaprenyl)benzoic acid into 4-hydroxy-3-methoxy-5-(all-trans-decaprenyl)benzoic acid. Also catalyzes the last step of ubiquinone biosynthesis by mediating methylation of 3-demethylubiquinone into ubiquinone. Also able to mediate the methylation of 3-demethylubiquinol-10 into ubiquinol-10. In Bos taurus (Bovine), this protein is Ubiquinone biosynthesis O-methyltransferase, mitochondrial.